Consider the following 146-residue polypeptide: Keratin-associated protein 4-1 (146 aa).

Repeat copies occupy residues 5–9, 24–28, 29–33, 34–38, 44–48, 54–58, 59–63, 64–68, 69–73, 83–87, 88–92, 102–106, 107–111, 121–125, 126–130, 131–135, 136–140, and 141–145. The 18 X 5 AA repeats of C-C-[GRQC]-[SPT]-[VSTL] stretch occupies residues 5–145; it reads CCGSVCSDQG…CCRPSCCGSS (141 aa).

The protein belongs to the KRTAP type 4 family. Interacts with hair keratins. In terms of tissue distribution, expressed in the hair follicles.

Its function is as follows. In the hair cortex, hair keratin intermediate filaments are embedded in an interfilamentous matrix, consisting of hair keratin-associated proteins (KRTAP), which are essential for the formation of a rigid and resistant hair shaft through their extensive disulfide bond cross-linking with abundant cysteine residues of hair keratins. The matrix proteins include the high-sulfur and high-glycine-tyrosine keratins. The sequence is that of Keratin-associated protein 4-1 (KRTAP4-1) from Homo sapiens (Human).